Here is a 38-residue protein sequence, read N- to C-terminus: Photosystem II reaction center protein X (38 aa).

Residues 8 to 28 (FLWSLVAGAVVLGALFGAIIF) traverse the membrane as a helical segment.

The protein belongs to the PsbX family. Type 1 subfamily. As to quaternary structure, PSII is composed of 1 copy each of membrane proteins PsbA, PsbB, PsbC, PsbD, PsbE, PsbF, PsbH, PsbI, PsbJ, PsbK, PsbL, PsbM, PsbT, PsbX, PsbY, PsbZ, Psb30/Ycf12, peripheral proteins PsbO, CyanoQ (PsbQ), PsbU, PsbV and a large number of cofactors. It forms dimeric complexes.

Its subcellular location is the cellular thylakoid membrane. Functionally, involved in the binding and/or turnover of quinones at the Q(B) site of photosystem II (PSII). PSII is a light-driven water plastoquinone oxidoreductase, using light energy to abstract electrons from H(2)O, generating a proton gradient subsequently used for ATP formation. The sequence is that of Photosystem II reaction center protein X from Synechococcus sp. (strain JA-2-3B'a(2-13)) (Cyanobacteria bacterium Yellowstone B-Prime).